The primary structure comprises 149 residues: Transcriptional regulator MraZ (149 aa).

SpoVT-AbrB domains follow at residues 5-52 (ITTL…PLPE) and 81-124 (AEEC…DSMV).

This sequence belongs to the MraZ family. In terms of assembly, forms oligomers.

The protein localises to the cytoplasm. It localises to the nucleoid. This is Transcriptional regulator MraZ from Nitrosococcus oceani (strain ATCC 19707 / BCRC 17464 / JCM 30415 / NCIMB 11848 / C-107).